We begin with the raw amino-acid sequence, 199 residues long: Neurotrophic factor BDNF precursor form (199 aa).

A disordered region spans residues 1–23 (GQGSLAYPGLRTQGNLETLSGPN). A propeptide spanning residues 1-100 (GQGSLAYPGL…AANMSMRVRR (100 aa)) is cleaved from the precursor. Positions 12–23 (TQGNLETLSGPN) are enriched in polar residues. A glycan (N-linked (GlcNAc...) asparagine) is linked at Asn-93. Cys-113 and Cys-180 are oxidised to a cystine.

The protein belongs to the NGF-beta family.

The protein localises to the secreted. Promotes the survival of neuronal populations that are all located either in the central nervous system or directly connected to it. This chain is Neurotrophic factor BDNF precursor form (BDNF), found in Morelia spilota (Carpet python).